The sequence spans 258 residues: Imidazole glycerol phosphate synthase subunit HisF (258 aa).

Residues Asp11 and Asp130 contribute to the active site.

The protein belongs to the HisA/HisF family. In terms of assembly, heterodimer of HisH and HisF.

The protein resides in the cytoplasm. It carries out the reaction 5-[(5-phospho-1-deoxy-D-ribulos-1-ylimino)methylamino]-1-(5-phospho-beta-D-ribosyl)imidazole-4-carboxamide + L-glutamine = D-erythro-1-(imidazol-4-yl)glycerol 3-phosphate + 5-amino-1-(5-phospho-beta-D-ribosyl)imidazole-4-carboxamide + L-glutamate + H(+). It functions in the pathway amino-acid biosynthesis; L-histidine biosynthesis; L-histidine from 5-phospho-alpha-D-ribose 1-diphosphate: step 5/9. Its function is as follows. IGPS catalyzes the conversion of PRFAR and glutamine to IGP, AICAR and glutamate. The HisF subunit catalyzes the cyclization activity that produces IGP and AICAR from PRFAR using the ammonia provided by the HisH subunit. This is Imidazole glycerol phosphate synthase subunit HisF from Escherichia coli O17:K52:H18 (strain UMN026 / ExPEC).